Reading from the N-terminus, the 679-residue chain is Methionine--tRNA ligase (679 aa).

A 'HIGH' region motif is present at residues Pro12–His22. Positions 143, 146, 156, and 159 each coordinate Zn(2+). Residues Lys328–Ser332 carry the 'KMSKS' region motif. Lys331 is an ATP binding site. The tRNA-binding domain occupies Asp577–Lys679.

It belongs to the class-I aminoacyl-tRNA synthetase family. MetG type 1 subfamily. As to quaternary structure, homodimer. It depends on Zn(2+) as a cofactor.

The protein resides in the cytoplasm. The enzyme catalyses tRNA(Met) + L-methionine + ATP = L-methionyl-tRNA(Met) + AMP + diphosphate. Is required not only for elongation of protein synthesis but also for the initiation of all mRNA translation through initiator tRNA(fMet) aminoacylation. In Actinobacillus pleuropneumoniae serotype 5b (strain L20), this protein is Methionine--tRNA ligase.